The sequence spans 162 residues: Shikimate kinase (162 aa).

10-15 contributes to the ATP binding site; that stretch reads GAGKST. Residue Ser14 coordinates Mg(2+). Substrate-binding residues include Asp28, Arg52, and Gly73. Arg113 is a binding site for ATP. Arg129 provides a ligand contact to substrate.

It belongs to the shikimate kinase family. As to quaternary structure, monomer. It depends on Mg(2+) as a cofactor.

It localises to the cytoplasm. The catalysed reaction is shikimate + ATP = 3-phosphoshikimate + ADP + H(+). The protein operates within metabolic intermediate biosynthesis; chorismate biosynthesis; chorismate from D-erythrose 4-phosphate and phosphoenolpyruvate: step 5/7. In terms of biological role, catalyzes the specific phosphorylation of the 3-hydroxyl group of shikimic acid using ATP as a cosubstrate. This is Shikimate kinase from Lactococcus lactis subsp. cremoris (strain SK11).